We begin with the raw amino-acid sequence, 202 residues long: Tetranectin (202 aa).

Residues 1-21 (MELWGAYLLLCLFSLLTQVTT) form the signal peptide. Thr25 carries O-linked (GalNAc...) threonine glycosylation. 3 disulfides stabilise this stretch: Cys71–Cys81, Cys98–Cys197, and Cys173–Cys189. One can recognise a C-type lectin domain in the interval 77–198 (VHMKCFLAFT…CRDQLPYICQ (122 aa)).

In terms of assembly, homotrimer. As to expression, found in plasma.

It is found in the secreted. Its function is as follows. Tetranectin binds to plasminogen and to isolated kringle 4. May be involved in the packaging of molecules destined for exocytosis. Plays a role in retinal function. The protein is Tetranectin (CLEC3B) of Homo sapiens (Human).